The primary structure comprises 60 residues: Potassium channel toxin alpha-KTx 3.16 (60 aa).

Residues Met-1 to Gly-23 form the signal peptide. Cystine bridges form between Cys-30–Cys-50, Cys-36–Cys-55, and Cys-40–Cys-57.

This sequence belongs to the short scorpion toxin superfamily. Potassium channel inhibitor family. Alpha-KTx 03 subfamily. As to expression, expressed by the venom gland.

The protein resides in the secreted. Functionally, potassium channel inhibitor. The chain is Potassium channel toxin alpha-KTx 3.16 from Mesobuthus gibbosus (Mediterranean checkered scorpion).